A 211-amino-acid polypeptide reads, in one-letter code: Octanoyltransferase (211 aa).

Positions 32–207 (PCTYDEIWFV…ELSKFLEIFI (176 aa)) constitute a BPL/LPL catalytic domain. Substrate-binding positions include 71–78 (RGGQITYH), 138–140 (SLG), and 151–153 (GLA). Cysteine 169 (acyl-thioester intermediate) is an active-site residue.

It belongs to the LipB family.

The protein resides in the cytoplasm. The enzyme catalyses octanoyl-[ACP] + L-lysyl-[protein] = N(6)-octanoyl-L-lysyl-[protein] + holo-[ACP] + H(+). It functions in the pathway protein modification; protein lipoylation via endogenous pathway; protein N(6)-(lipoyl)lysine from octanoyl-[acyl-carrier-protein]: step 1/2. In terms of biological role, catalyzes the transfer of endogenously produced octanoic acid from octanoyl-acyl-carrier-protein onto the lipoyl domains of lipoate-dependent enzymes. Lipoyl-ACP can also act as a substrate although octanoyl-ACP is likely to be the physiological substrate. The sequence is that of Octanoyltransferase from Buchnera aphidicola subsp. Acyrthosiphon pisum (strain APS) (Acyrthosiphon pisum symbiotic bacterium).